Reading from the N-terminus, the 118-residue chain is Small ribosomal subunit protein uS13 (118 aa).

A disordered region spans residues 93–118 (RGLPVRGQRTKTNARTRKGPRKPIRK).

The protein belongs to the universal ribosomal protein uS13 family. In terms of assembly, part of the 30S ribosomal subunit. Forms a loose heterodimer with protein S19. Forms two bridges to the 50S subunit in the 70S ribosome.

Its function is as follows. Located at the top of the head of the 30S subunit, it contacts several helices of the 16S rRNA. In the 70S ribosome it contacts the 23S rRNA (bridge B1a) and protein L5 of the 50S subunit (bridge B1b), connecting the 2 subunits; these bridges are implicated in subunit movement. Contacts the tRNAs in the A and P-sites. The chain is Small ribosomal subunit protein uS13 from Pseudomonas syringae pv. tomato (strain ATCC BAA-871 / DC3000).